A 450-amino-acid polypeptide reads, in one-letter code: Glucose-6-phosphate isomerase (450 aa).

Thr-39 carries the phosphothreonine modification. The active-site Proton donor is Glu-291. Active-site residues include His-312 and Lys-426.

Belongs to the GPI family.

The protein resides in the cytoplasm. It catalyses the reaction alpha-D-glucose 6-phosphate = beta-D-fructose 6-phosphate. It participates in carbohydrate biosynthesis; gluconeogenesis. The protein operates within carbohydrate degradation; glycolysis; D-glyceraldehyde 3-phosphate and glycerone phosphate from D-glucose: step 2/4. Its function is as follows. Catalyzes the reversible isomerization of glucose-6-phosphate to fructose-6-phosphate. This is Glucose-6-phosphate isomerase from Bacillus cereus (strain ATCC 10987 / NRS 248).